The sequence spans 4036 residues: Hybrid PKS-NRPS synthetase iliA (4036 aa).

Positions 7–439 (PEPIAVIGSA…GTNAHAIIES (433 aa)) constitute a Ketosynthase family 3 (KS3) domain. Catalysis depends on for beta-ketoacyl synthase activity residues Cys-181, His-318, and His-359. The segment at 561 to 886 (IFTGQGAQWP…LKRNGSDVEA (326 aa)) is malonyl-CoA:ACP transacylase (MAT) domain. Positions 955-1092 (HELLGRRTPD…GDLVVHLGAD (138 aa)) are N-terminal hotdog fold. Residues 955–1262 (HELLGRRTPD…ATNMVGEQDA (308 aa)) form a dehydratase (DH) domain region. In terms of domain architecture, PKS/mFAS DH spans 955–1263 (HELLGRRTPD…TNMVGEQDAS (309 aa)). The active-site Proton acceptor; for dehydratase activity is His-987. The C-terminal hotdog fold stretch occupies residues 1109-1263 (LVNIDGERVY…TNMVGEQDAS (155 aa)). Residue Asp-1168 is the Proton donor; for dehydratase activity of the active site. The interval 1402–1601 (EDDMLDRFYM…FSGADTVMHD (200 aa)) is methyltransferase (MT) domain. The tract at residues 2136-2277 (KTYFMVGMAG…SVATVIGNIG (142 aa)) is ketoreductase (KR) domain. One can recognise a Carrier 1 domain in the interval 2425-2502 (EAVAAVVKAF…QVCTWATKKV (78 aa)). At Ser-2462 the chain carries O-(pantetheine 4'-phosphoryl)serine. Disordered stretches follow at residues 2520–2583 (AEKT…KLGT) and 2597–2621 (DADA…NRPE). Pro residues predominate over residues 2530-2540 (APAPDAAPAPA). The condensation (C) domain stretch occupies residues 2627–3054 (IMSQAQSRIW…HLDITECEIY (428 aa)). The interval 3088 to 3485 (SLHSDKSAVK…GTLLCLGRLD (398 aa)) is adenylation (A) (KR) domain. Residues 3088–3485 (SLHSDKSAVK…GTLLCLGRLD (398 aa)) form a reductase (RED) domain region. In terms of domain architecture, Carrier 2 spans 3596–3675 (EKMTIREGEV…EMARRIDEHQ (80 aa)). Residue Ser-3635 is modified to O-(pantetheine 4'-phosphoryl)serine.

In the C-terminal section; belongs to the NRP synthetase family.

It carries out the reaction L-tyrosine + holo-[ACP] + 7 malonyl-CoA + acetyl-CoA + 8 AH2 + 2 S-adenosyl-L-methionine + ATP + 4 H(+) = N-[(4E,6E,10S,12Z,14E)-6,10-dimethyl-3-oxohexadeca-4,6,12,14-tetraenoyl]-L-tyrosyl-[ACP] + 8 A + AMP + 2 S-adenosyl-L-homocysteine + 7 CO2 + diphosphate + 8 CoA + 6 H2O. It functions in the pathway mycotoxin biosynthesis. Hybrid PKS-NRPS synthetase; part of the gene cluster that mediates the biosynthesis of ilicicolin H, a 4-hydroxy-2-pyridonealkaloid that has potent and broad antifungal activities by inhibiting the mitochondrial respiration chain. IliA assembles the backbone of ilicicolin H. The PKS portion and trans-acting enoyl reductase iliB work together to construct an octaketide, and two methyl groups are introduced by the MT domain during the chain assembly. The nascent chain is then condensed with tyrosine, catalyzed by the C domain, and the resulting PKS-NRPS hybrid is offloaded by the RED domain to form an advanced tetramic acid intermediate. The biosynthesis of ilicicolin H starts with formation of the tetramic acid by the hybrid PKS-NRPS synthetase iliA with the partnering trans-enoyl reductase iliB since iliA lacks a designated enoylreductase (ER) domain. The cytochrome P450 monooxygenase iliC then catalyzes the ring expansion of the tetramate to the acyclic 2-pyridone. The pericyclase iliD further converts the acyclic 2-pyridone into 8-epi-ilicicolin H. 8-epi-ilicicolin H might then spontaneously convert to ilicicolin H, since ilicicolin H is produced in the absence of the epimerase iliE, in contrast to what was observed for the Talaromyces variabilis ilicolin H biosynthetic pathway. The protein is Hybrid PKS-NRPS synthetase iliA of Neonectria sp. (strain DH2).